We begin with the raw amino-acid sequence, 109 residues long: SKSSTETPPSYNQLNYNENLQRFFNSKPATAPVEFDPIKMDQSYNEPAEAECTVSPVQCFEGSGGSGSSGNFTSGSNLNMRSVTNTSNTGTGTSSESVPLVTLTEALIS.

The tract at residues 59-109 (CFEGSGGSGSSGNFTSGSNLNMRSVTNTSNTGTGTSSESVPLVTLTEALIS) is disordered. Residues 69–98 (SGNFTSGSNLNMRSVTNTSNTGTGTSSESV) show a composition bias toward low complexity.

Forms a heterodimer with timeless (TIM); the complex then translocates into the nucleus. Post-translationally, phosphorylated with a circadian rhythmicity, probably by the double-time protein (dbt). Phosphorylation could be implicated in the stability of per monomer and in the formation of heterodimer per-tim.

It is found in the nucleus. The protein resides in the cytoplasm. The protein localises to the perinuclear region. Functionally, essential for biological clock functions. Determines the period length of circadian and ultradian rhythms; an increase in PER dosage leads to shortened circadian rhythms and a decrease leads to lengthened circadian rhythms. Essential for the circadian rhythmicity of locomotor activity, eclosion behavior, and for the rhythmic component of the male courtship song that originates in the thoracic nervous system. The biological cycle depends on the rhythmic formation and nuclear localization of the TIM-PER complex. Light induces the degradation of TIM, which promotes elimination of PER. Nuclear activity of the heterodimer coordinatively regulates PER and TIM transcription through a negative feedback loop. Behaves as a negative element in circadian transcriptional loop. Does not appear to bind DNA, suggesting indirect transcriptional inhibition. The chain is Period circadian protein (per) from Syritta pipiens (Hoverfly).